The following is a 75-amino-acid chain: MGISIWQLLIVLGIVILLFGTKKLRNIGSDLGGAIRGFKKSMSDEEEKNAEQQPLEKQNAEQQAQAEDKPKEKQG.

Residues Met-1–Thr-21 traverse the membrane as a helical segment. The interval Ser-41 to Gly-75 is disordered. The segment covering Glu-56 to Gln-65 has biased composition (low complexity). Residues Ala-66 to Gly-75 show a composition bias toward basic and acidic residues.

The protein belongs to the TatA/E family. As to quaternary structure, the Tat system comprises two distinct complexes: a TatABC complex, containing multiple copies of TatA, TatB and TatC subunits, and a separate TatA complex, containing only TatA subunits. Substrates initially bind to the TatABC complex, which probably triggers association of the separate TatA complex to form the active translocon.

It is found in the cell inner membrane. Part of the twin-arginine translocation (Tat) system that transports large folded proteins containing a characteristic twin-arginine motif in their signal peptide across membranes. TatA could form the protein-conducting channel of the Tat system. In Marinobacter nauticus (strain ATCC 700491 / DSM 11845 / VT8) (Marinobacter aquaeolei), this protein is Sec-independent protein translocase protein TatA.